The chain runs to 265 residues: Mlc titration factor A (265 aa).

Residues His111, His148, His152, and Glu211 each coordinate Zn(2+).

Belongs to the MtfA family. In terms of assembly, interacts with Mlc. Requires Zn(2+) as cofactor.

The protein resides in the cytoplasm. In terms of biological role, involved in the modulation of the activity of the glucose-phosphotransferase system (glucose-PTS). Interacts with the transcriptional repressor Mlc, preventing its interaction with DNA and leading to the modulation of expression of genes regulated by Mlc, including ptsG, which encodes the PTS system glucose-specific EIICB component. Shows zinc-dependent metallopeptidase activity. This chain is Mlc titration factor A, found in Salmonella schwarzengrund (strain CVM19633).